Here is a 180-residue protein sequence, read N- to C-terminus: Ribosome maturation factor RimM (180 aa).

The region spanning 104-177 (EGEFHLLDLV…WLLLTPPPGL (74 aa)) is the PRC barrel domain.

It belongs to the RimM family. Binds ribosomal protein uS19.

It localises to the cytoplasm. An accessory protein needed during the final step in the assembly of 30S ribosomal subunit, possibly for assembly of the head region. Essential for efficient processing of 16S rRNA. May be needed both before and after RbfA during the maturation of 16S rRNA. It has affinity for free ribosomal 30S subunits but not for 70S ribosomes. The polypeptide is Ribosome maturation factor RimM (Synechococcus sp. (strain CC9902)).